The sequence spans 438 residues: Probable 26S proteasome regulatory subunit rpn-6.1 (438 aa).

Residues 1 to 10 (MRETSSREDT) are compositionally biased toward basic and acidic residues. The tract at residues 1–30 (MRETSSREDTNNIGKAPEMSGGTIMDTMTS) is disordered. The 170-residue stretch at 239-408 (DFKTAFSYFY…GMLIVFEIAV (170 aa)) folds into the PCI domain.

This sequence belongs to the proteasome subunit S9 family. Component of the lid subcomplex of the 19S proteasome regulatory particle complex (also named PA700 complex). The 26S proteasome consists of a 20S proteasome core and two 19S regulatory subunits.

Its function is as follows. Component of the lid subcomplex of the 26S proteasome, a multiprotein complex involved in the ATP-dependent degradation of ubiquitinated proteins. In the complex, rpn-6.1 is required for proteasome assembly. Plays a key role in increased proteasome activity in response to proteotoxic stress: induced by daf-16, promoting enhanced assembly of the 26S proteasome and higher proteasome activity, leading to extended lifespan. In Caenorhabditis elegans, this protein is Probable 26S proteasome regulatory subunit rpn-6.1.